The following is a 694-amino-acid chain: MAREYKIEDYRNFGIMAHIDAGKTTMTERILFYTGKNHKIGETHDGASTMDWMEQEQERGITITSAATTTFWQGRDGKKRRFNIIDTPGHVDFTIEVERSLRVLDGAIALLDANAGVEPQTETVWRQAEKYHVPRMVFVNKMDKIGADFYRSVEMVGSRLGAVALPVQLPIGAENDFVGVVDLIEMKALTWDGTIGAPATVGEIPADMADKAEEYREKLIELAVEIDEAAMEAYLEGTMPTNDELRALIRKGTIEVKFHPILCGTAFKNRGVQPLLDAVVEFLPAPTDVPAIKGIDVKTETETTRESSDEAPLSMLAFKIMNDPFVGSLTFARIYSGKLTKGVSLENTVKGKRERIGRMLQMHSNSREDIDEAFAGDIVALAGLKETTTGDTLCDPLKPVILERMEFPDPVIEIAIEPKTKADQEKMGIALNRLAAEDPSFRVKSDEESGQTIIAGMGELHLDILVDRMKREFKVEANVGAPQVAYRESITRAAEIDYTHKKQSGGSGQFARVKIIFEPHDGDDFIFESKIVGGSVPKEYIPGVQKGIESVMGAGPLAGFPMLGVKATLIDGAYHDVDSSVLAFEIASRAAFREGAQKAGAQLLEPIMKVEVVTPEDYVGDVIGDLNSRRGQISGTEGRGIATVVNAMVPLANMFGYVNSLRSMSQGRAQYTMQFDHYEPVPTAVAQEIQKKFA.

The tr-type G domain occupies 8-287 (EDYRNFGIMA…AVVEFLPAPT (280 aa)). GTP is bound by residues 17–24 (AHIDAGKT), 86–90 (DTPGH), and 140–143 (NKMD).

It belongs to the TRAFAC class translation factor GTPase superfamily. Classic translation factor GTPase family. EF-G/EF-2 subfamily.

It is found in the cytoplasm. In terms of biological role, catalyzes the GTP-dependent ribosomal translocation step during translation elongation. During this step, the ribosome changes from the pre-translocational (PRE) to the post-translocational (POST) state as the newly formed A-site-bound peptidyl-tRNA and P-site-bound deacylated tRNA move to the P and E sites, respectively. Catalyzes the coordinated movement of the two tRNA molecules, the mRNA and conformational changes in the ribosome. The sequence is that of Elongation factor G from Brucella ovis (strain ATCC 25840 / 63/290 / NCTC 10512).